A 367-amino-acid chain; its full sequence is Beta sliding clamp (367 aa).

The protein belongs to the beta sliding clamp family. As to quaternary structure, forms a ring-shaped head-to-tail homodimer around DNA which binds and tethers DNA polymerases and other proteins to the DNA. The DNA replisome complex has a single clamp-loading complex (3 tau and 1 each of delta, delta', psi and chi subunits) which binds 3 Pol III cores (1 core on the leading strand and 2 on the lagging strand) each with a beta sliding clamp dimer. Additional proteins in the replisome are other copies of gamma, psi and chi, Ssb, DNA helicase and RNA primase.

The protein localises to the cytoplasm. Its function is as follows. Confers DNA tethering and processivity to DNA polymerases and other proteins. Acts as a clamp, forming a ring around DNA (a reaction catalyzed by the clamp-loading complex) which diffuses in an ATP-independent manner freely and bidirectionally along dsDNA. Initially characterized for its ability to contact the catalytic subunit of DNA polymerase III (Pol III), a complex, multichain enzyme responsible for most of the replicative synthesis in bacteria; Pol III exhibits 3'-5' exonuclease proofreading activity. The beta chain is required for initiation of replication as well as for processivity of DNA replication. This chain is Beta sliding clamp (dnaN), found in Pseudomonas putida (strain ATCC 47054 / DSM 6125 / CFBP 8728 / NCIMB 11950 / KT2440).